Consider the following 57-residue polypeptide: Light-harvesting protein B-808/866 alpha chain (57 aa).

The residue at position 1 (M1) is an N-formylmethionine. At 1–10 (MQPRSPVRTN) the chain is on the cytoplasmic side. Residues 11 to 30 (IVIFTILGFVVALLIHFIVL) traverse the membrane as a helical segment. A bacteriochlorophyll is bound at residue H26. The Periplasmic portion of the chain corresponds to 31-57 (SSPEYNWLSNAEGGALLLSAARALFGI).

This sequence belongs to the antenna complex alpha subunit family. The core complex is formed by different alpha and beta chains, binding bacteriochlorophyll molecules, and arranged most probably in tetrameric structures disposed around the reaction center. The non-pigmented gamma chains may constitute additional components.

The protein resides in the cell membrane. Antenna complexes are light-harvesting systems, which transfer the excitation energy to the reaction centers. In Chloroflexus aurantiacus (strain ATCC 29366 / DSM 635 / J-10-fl), this protein is Light-harvesting protein B-808/866 alpha chain (puf2A).